The following is a 328-amino-acid chain: Transcription factor bHLH84 (328 aa).

The interval 145–248 (QCESSKKRTR…ASRGAATDPQ (104 aa)) is disordered. Residues 220–229 (LSKEDGEDSK) are compositionally biased toward basic and acidic residues. The bHLH domain maps to 243-292 (AATDPQSLYARKRRERINERLRILQHLVPNGTKVDISTMLEEAVQYVKFL).

The protein belongs to the bHLH protein family. In terms of assembly, homodimer.

It localises to the nucleus. The sequence is that of Transcription factor bHLH84 (BHLH84) from Arabidopsis thaliana (Mouse-ear cress).